Here is a 552-residue protein sequence, read N- to C-terminus: L-ascorbate oxidase (552 aa).

2 Plastocyanin-like domains span residues 1–122 (SQIR…LIVD) and 134–300 (DGEI…NYLP). 3 cysteine pairs are disulfide-bonded: C19-C201, C81-C538, and C180-C193. Residues H60 and H62 each coordinate Cu cation. The N-linked (GlcNAc...) asparagine glycan is linked to N92. Positions 104 and 106 each coordinate Cu cation. N-linked (GlcNAc...) asparagine glycans are attached at residues N325 and N440. One can recognise a Plastocyanin-like 3 domain in the interval 344 to 523 (NRRIFLLNTQ…HMGMGVVFAE (180 aa)). Cu cation contacts are provided by H445, H448, H450, H506, C507, H508, H512, and M517.

This sequence belongs to the multicopper oxidase family. Dimer. Cu cation is required as a cofactor.

It localises to the secreted. The enzyme catalyses 4 L-ascorbate + O2 = 4 monodehydro-L-ascorbate radical + 2 H2O. Functionally, may be involved in a redox system involving ascorbic acid. In Cucurbita pepo var. melopepo (Zucchini), this protein is L-ascorbate oxidase.